A 337-amino-acid polypeptide reads, in one-letter code: F420-dependent glucose-6-phosphate dehydrogenase 2 (337 aa).

Asp40 provides a ligand contact to coenzyme F420-(gamma-Glu)n. Residue His41 is the Proton donor of the active site. Coenzyme F420-(gamma-Glu)n contacts are provided by residues Thr77 and 108 to 109; that span reads TG. The active-site Proton acceptor is the Glu110. Residues Asn113, 178-179, and 181-182 contribute to the coenzyme F420-(gamma-Glu)n site; these read GG and VV. Thr196, Lys199, Lys260, and Arg284 together coordinate substrate.

The protein belongs to the F420-dependent glucose-6-phosphate dehydrogenase family. Homodimer.

The catalysed reaction is oxidized coenzyme F420-(gamma-L-Glu)(n) + D-glucose 6-phosphate + H(+) = 6-phospho-D-glucono-1,5-lactone + reduced coenzyme F420-(gamma-L-Glu)(n). Its function is as follows. Catalyzes the coenzyme F420-dependent oxidation of glucose 6-phosphate (G6P) to 6-phosphogluconolactone. In Rhodococcus jostii (strain RHA1), this protein is F420-dependent glucose-6-phosphate dehydrogenase 2.